The primary structure comprises 898 residues: Alanine--tRNA ligase (898 aa).

Zn(2+) is bound by residues H584, H588, C686, and H690.

Belongs to the class-II aminoacyl-tRNA synthetase family. Zn(2+) serves as cofactor.

Its subcellular location is the cytoplasm. The catalysed reaction is tRNA(Ala) + L-alanine + ATP = L-alanyl-tRNA(Ala) + AMP + diphosphate. Functionally, catalyzes the attachment of alanine to tRNA(Ala) in a two-step reaction: alanine is first activated by ATP to form Ala-AMP and then transferred to the acceptor end of tRNA(Ala). Also edits incorrectly charged Ser-tRNA(Ala) and Gly-tRNA(Ala) via its editing domain. This is Alanine--tRNA ligase from Myxococcus xanthus (strain DK1622).